Here is a 130-residue protein sequence, read N- to C-terminus: Small ribosomal subunit protein uS8 (130 aa).

The protein belongs to the universal ribosomal protein uS8 family. Part of the 30S ribosomal subunit.

One of the primary rRNA binding proteins, it binds directly to 16S rRNA central domain where it helps coordinate assembly of the platform of the 30S subunit. The chain is Small ribosomal subunit protein uS8 from Haloarcula marismortui (strain ATCC 43049 / DSM 3752 / JCM 8966 / VKM B-1809) (Halobacterium marismortui).